Consider the following 214-residue polypeptide: Probable transaldolase (214 aa).

The active-site Schiff-base intermediate with substrate is the Lys-83.

The protein belongs to the transaldolase family. Type 3B subfamily.

The protein resides in the cytoplasm. It catalyses the reaction D-sedoheptulose 7-phosphate + D-glyceraldehyde 3-phosphate = D-erythrose 4-phosphate + beta-D-fructose 6-phosphate. It participates in carbohydrate degradation; pentose phosphate pathway; D-glyceraldehyde 3-phosphate and beta-D-fructose 6-phosphate from D-ribose 5-phosphate and D-xylulose 5-phosphate (non-oxidative stage): step 2/3. In terms of biological role, transaldolase is important for the balance of metabolites in the pentose-phosphate pathway. In Leptospira borgpetersenii serovar Hardjo-bovis (strain JB197), this protein is Probable transaldolase.